The following is a 142-amino-acid chain: Spliceosomal protein DIB1 (142 aa).

This sequence belongs to the DIM1 family. In terms of assembly, component of the 25S [U4/U6.U5] tri-snRNP.

The protein resides in the nucleus. Its function is as follows. Essential role in pre-mRNA splicing. Also essential for entry into mitosis (G2/M progression) as well as for chromosome segregation during mitosis. The polypeptide is Spliceosomal protein DIB1 (DIB1) (Candida glabrata (strain ATCC 2001 / BCRC 20586 / JCM 3761 / NBRC 0622 / NRRL Y-65 / CBS 138) (Yeast)).